We begin with the raw amino-acid sequence, 310 residues long: 4-hydroxyproline 2-epimerase (310 aa).

Cys88 acts as the Proton acceptor in catalysis. Residues 89–90 (GH), His208, and Asp232 contribute to the substrate site. Residue Cys236 is the Proton donor of the active site. 237-238 (GT) contributes to the substrate binding site.

It belongs to the proline racemase family.

It catalyses the reaction trans-4-hydroxy-L-proline = cis-4-hydroxy-D-proline. Functionally, catalyzes the epimerization of trans-4-hydroxy-L-proline (t4LHyp) to cis-4-hydroxy-D-proline (c4DHyp). Is likely involved in a degradation pathway that converts t4LHyp to alpha-ketoglutarate. Displays no proline racemase activity. The polypeptide is 4-hydroxyproline 2-epimerase (Acinetobacter baumannii (strain ATCC 17978 / DSM 105126 / CIP 53.77 / LMG 1025 / NCDC KC755 / 5377)).